Consider the following 65-residue polypeptide: Large ribosomal subunit protein bL35 (65 aa).

Belongs to the bacterial ribosomal protein bL35 family.

The chain is Large ribosomal subunit protein bL35 from Xanthomonas campestris pv. campestris (strain ATCC 33913 / DSM 3586 / NCPPB 528 / LMG 568 / P 25).